The primary structure comprises 208 residues: uncharacterized protein (208 aa).

This is an uncharacterized protein from Schizosaccharomyces pombe (strain 972 / ATCC 24843) (Fission yeast).